Here is an 83-residue protein sequence, read N- to C-terminus: Cytochrome b559 subunit alpha (83 aa).

The chain crosses the membrane as a helical span at residues 21–35 (VIHSITIPSLFIAGW). Heme is bound at residue histidine 23.

It belongs to the PsbE/PsbF family. Heterodimer of an alpha subunit and a beta subunit. PSII is composed of 1 copy each of membrane proteins PsbA, PsbB, PsbC, PsbD, PsbE, PsbF, PsbH, PsbI, PsbJ, PsbK, PsbL, PsbM, PsbT, PsbX, PsbY, PsbZ, Psb30/Ycf12, at least 3 peripheral proteins of the oxygen-evolving complex and a large number of cofactors. It forms dimeric complexes. Requires heme b as cofactor.

The protein resides in the plastid. The protein localises to the chloroplast thylakoid membrane. Functionally, this b-type cytochrome is tightly associated with the reaction center of photosystem II (PSII). PSII is a light-driven water:plastoquinone oxidoreductase that uses light energy to abstract electrons from H(2)O, generating O(2) and a proton gradient subsequently used for ATP formation. It consists of a core antenna complex that captures photons, and an electron transfer chain that converts photonic excitation into a charge separation. The sequence is that of Cytochrome b559 subunit alpha from Phalaenopsis aphrodite subsp. formosana (Moth orchid).